A 505-amino-acid chain; its full sequence is Alpha-ketoglutarate-dependent dioxygenase FTO (505 aa).

Residue Thr-4 is modified to Phosphothreonine. Residues 32 to 327 (TPKDDEFYQQ…SSTHRVAECS (296 aa)) are fe2OG dioxygenase domain. Residues Arg-96 and Tyr-108 each coordinate substrate. Asn-205 provides a ligand contact to 2-oxoglutarate. The interval 213–224 (PYLKEEPYFGMG) is loop L1; predicted to block binding of double-stranded DNA or RNA. An N6-acetyllysine modification is found at Lys-216. Positions 231 and 233 each coordinate Fe cation. 231–234 (HHDE) is a substrate binding site. Tyr-295 lines the 2-oxoglutarate pocket. His-307 provides a ligand contact to Fe cation. 2-oxoglutarate contacts are provided by residues 316–318 (RFS), Thr-320, and Arg-322.

This sequence belongs to the fto family. In terms of assembly, monomer. May also exist as homodimer. Requires Fe(2+) as cofactor.

The protein localises to the nucleus. It is found in the nucleus speckle. Its subcellular location is the cytoplasm. The catalysed reaction is a 5'-end (N(7)-methyl 5'-triphosphoguanosine)-(N(6),2'-O-dimethyladenosine) in mRNA + 2-oxoglutarate + O2 = a 5'-end (N(7)-methyl 5'-triphosphoguanosine)-(2'-O-methyladenosine) in mRNA + formaldehyde + succinate + CO2. It carries out the reaction an N(6)-methyladenosine in mRNA + 2-oxoglutarate + O2 = an adenosine in mRNA + formaldehyde + succinate + CO2. It catalyses the reaction N(6)-methyladenosine in U6 snRNA + 2-oxoglutarate + O2 = adenosine in U6 snRNA + formaldehyde + succinate + CO2. The enzyme catalyses a 5'-end (N(7)-methyl 5'-triphosphoguanosine)-(N(6),2'-O-dimethyladenosine) in U6 snRNA + 2-oxoglutarate + O2 = a 5'-end (N(7)-methyl 5'-triphosphoguanosine)-(2'-O-methyladenosine) in U6 snRNA + formaldehyde + succinate + CO2. The catalysed reaction is an N(1)-methyladenosine in tRNA + 2-oxoglutarate + O2 = an adenosine in tRNA + formaldehyde + succinate + CO2. With respect to regulation, activated by ascorbate. Inhibited by N-oxalylglycine, fumarate and succinate. RNA demethylase that mediates oxidative demethylation of different RNA species, such as mRNAs, tRNAs and snRNAs, and acts as a regulator of fat mass, adipogenesis and energy homeostasis. Specifically demethylates N(6)-methyladenosine (m6A) RNA, the most prevalent internal modification of messenger RNA (mRNA) in higher eukaryotes. M6A demethylation by FTO affects mRNA expression and stability. Also able to demethylate m6A in U6 small nuclear RNA (snRNA). Mediates demethylation of N(6),2'-O-dimethyladenosine cap (m6A(m)), by demethylating the N(6)-methyladenosine at the second transcribed position of mRNAs and U6 snRNA. Demethylation of m6A(m) in the 5'-cap by FTO affects mRNA stability by promoting susceptibility to decapping. Also acts as a tRNA demethylase by removing N(1)-methyladenine from various tRNAs. Has no activity towards 1-methylguanine. Has no detectable activity towards double-stranded DNA. Also able to repair alkylated DNA and RNA by oxidative demethylation: demethylates single-stranded RNA containing 3-methyluracil, single-stranded DNA containing 3-methylthymine and has low demethylase activity towards single-stranded DNA containing 1-methyladenine or 3-methylcytosine. Ability to repair alkylated DNA and RNA is however unsure in vivo. Involved in the regulation of fat mass, adipogenesis and body weight, thereby contributing to the regulation of body size and body fat accumulation. Involved in the regulation of thermogenesis and the control of adipocyte differentiation into brown or white fat cells. Regulates activity of the dopaminergic midbrain circuitry via its ability to demethylate m6A in mRNAs. This Pongo abelii (Sumatran orangutan) protein is Alpha-ketoglutarate-dependent dioxygenase FTO.